We begin with the raw amino-acid sequence, 273 residues long: Dermonecrotic toxin LhSicTox-alphaIA2aviii (273 aa).

Histidine 5 is a catalytic residue. Positions 25 and 27 each coordinate Mg(2+). Residue histidine 41 is the Nucleophile of the active site. 2 cysteine pairs are disulfide-bonded: cysteine 45–cysteine 51 and cysteine 47–cysteine 190. Aspartate 85 is a binding site for Mg(2+).

The protein belongs to the arthropod phospholipase D family. Class II subfamily. Requires Mg(2+) as cofactor. As to expression, expressed by the venom gland.

The protein localises to the secreted. It catalyses the reaction an N-(acyl)-sphingosylphosphocholine = an N-(acyl)-sphingosyl-1,3-cyclic phosphate + choline. The catalysed reaction is an N-(acyl)-sphingosylphosphoethanolamine = an N-(acyl)-sphingosyl-1,3-cyclic phosphate + ethanolamine. It carries out the reaction a 1-acyl-sn-glycero-3-phosphocholine = a 1-acyl-sn-glycero-2,3-cyclic phosphate + choline. The enzyme catalyses a 1-acyl-sn-glycero-3-phosphoethanolamine = a 1-acyl-sn-glycero-2,3-cyclic phosphate + ethanolamine. In terms of biological role, dermonecrotic toxins cleave the phosphodiester linkage between the phosphate and headgroup of certain phospholipids (sphingolipid and lysolipid substrates), forming an alcohol (often choline) and a cyclic phosphate. This toxin acts on sphingomyelin (SM). It may also act on ceramide phosphoethanolamine (CPE), lysophosphatidylcholine (LPC) and lysophosphatidylethanolamine (LPE), but not on lysophosphatidylserine (LPS), and lysophosphatidylglycerol (LPG). It acts by transphosphatidylation, releasing exclusively cyclic phosphate products as second products. Induces dermonecrosis, hemolysis, increased vascular permeability, edema, inflammatory response, and platelet aggregation. This is Dermonecrotic toxin LhSicTox-alphaIA2aviii from Loxosceles hirsuta (Recluse spider).